We begin with the raw amino-acid sequence, 122 residues long: Large ribosomal subunit protein uL14 (122 aa).

It belongs to the universal ribosomal protein uL14 family. Part of the 50S ribosomal subunit. Forms a cluster with proteins L3 and L19. In the 70S ribosome, L14 and L19 interact and together make contacts with the 16S rRNA in bridges B5 and B8.

Functionally, binds to 23S rRNA. Forms part of two intersubunit bridges in the 70S ribosome. The polypeptide is Large ribosomal subunit protein uL14 (Chromobacterium violaceum (strain ATCC 12472 / DSM 30191 / JCM 1249 / CCUG 213 / NBRC 12614 / NCIMB 9131 / NCTC 9757 / MK)).